Consider the following 245-residue polypeptide: Adenylate kinase (245 aa).

15–20 (GSGKGT) contacts ATP. The segment at 35-64 (SSGDLLRGAVSKDTPLSQEIKSYLDQGKLL) is NMP. AMP is bound by residues Ser36, Arg41, 62–64 (KLL), 103–106 (GFPR), and Gln110. The tract at residues 143 to 176 (SRYICPACQGIYNEQQGFSSCPKCSVELIRRSDD) is LID. Arg144 is an ATP binding site. Zn(2+) is bound by residues Cys147 and Cys150. 153 to 154 (IY) lines the ATP pocket. The Zn(2+) site is built by Cys163 and Cys166. AMP-binding residues include Arg173 and Arg184. ATP is bound at residue Ala212.

The protein belongs to the adenylate kinase family. Monomer.

The protein localises to the cytoplasm. The enzyme catalyses AMP + ATP = 2 ADP. Its pathway is purine metabolism; AMP biosynthesis via salvage pathway; AMP from ADP: step 1/1. Functionally, catalyzes the reversible transfer of the terminal phosphate group between ATP and AMP. Plays an important role in cellular energy homeostasis and in adenine nucleotide metabolism. The sequence is that of Adenylate kinase from Chlamydia trachomatis serovar L2 (strain ATCC VR-902B / DSM 19102 / 434/Bu).